A 285-amino-acid polypeptide reads, in one-letter code: PHO85 cyclin-7 (285 aa).

Low complexity predominate over residues 1–14 (MELSSPSKKTTTSP). Positions 1 to 42 (MELSSPSKKTTTSPINIPGGNRDNLIIGPHSHSFKTDPFSSN) are disordered. Serine 69 carries the post-translational modification Phosphoserine.

It belongs to the cyclin family. PHO80 subfamily. As to quaternary structure, forms a cyclin-CDK complex with PHO85. Interacts with the substrate proteins MMR1 and YJL084C. Interacts with the CDK inhibitor (CKI) PHO81.

It is found in the cytoplasm. The PCL7-PHO85 cyclin-CDK is inhibited by PHO81 in low-phosphate conditions. Cyclin partner of the cyclin-dependent kinase (CDK) PHO85. Together with cyclin PCL6, controls glycogen phosphorylase and glycogen synthase activities in response to nutrient availablility. The PCL7-PHO85 cyclin-CDK holoenzyme has GLC8 kinase activity and phosphorylates and inactivates the phosphatase PP1-2 inhibitor GLC8, causing activation of PP1-2, which then dephosphorylates and activates glycogen phosphorylase. PCL7-PHO85 also phosphorylates MMR1 and YJL084C. This chain is PHO85 cyclin-7 (PCL7), found in Saccharomyces cerevisiae (strain ATCC 204508 / S288c) (Baker's yeast).